Consider the following 243-residue polypeptide: Cyclin-dependent kinase 20 (243 aa).

One can recognise a Protein kinase domain in the interval 4–243 (YCILGRIGEG…IHLSCRFLSV (240 aa)). Residues 10–18 (IGEGAHGIV) and Lys-33 each bind ATP. Asp-127 functions as the Proton acceptor in the catalytic mechanism.

The protein belongs to the protein kinase superfamily. CMGC Ser/Thr protein kinase family. CDC2/CDKX subfamily. Monomer. Interacts with TBC1D32 and MAK.

It is found in the nucleus. The protein resides in the cytoplasm. The protein localises to the cell projection. Its subcellular location is the cilium. It carries out the reaction L-seryl-[protein] + ATP = O-phospho-L-seryl-[protein] + ADP + H(+). It catalyses the reaction L-threonyl-[protein] + ATP = O-phospho-L-threonyl-[protein] + ADP + H(+). Required for high-level Shh responses in the developing neural tube. Together with TBC1D32, controls the structure of the primary cilium by coordinating assembly of the ciliary membrane and axoneme, allowing GLI2 to be properly activated in response to SHH signaling. Involved in cell growth. Activates CDK2, a kinase involved in the control of the cell cycle, by phosphorylating residue 'Thr-160'. This Macaca mulatta (Rhesus macaque) protein is Cyclin-dependent kinase 20 (CDK20).